The following is a 179-amino-acid chain: Lipoprotein signal peptidase (179 aa).

Transmembrane regions (helical) follow at residues 10-30 (LFQFYPHNLIWLGLSILAIII), 48-68 (VPVLPFLNWTLLHNYGAAFSF), 75-95 (WQHYLFTGLAGIVSIIFIFWL), and 101-121 (NAMILPAAIALILGGALGNLI). Active-site residues include D131 and D149. The helical transmembrane segment at 141 to 161 (HFPAFNIADSAITIGTILLLI) threads the bilayer.

Belongs to the peptidase A8 family.

The protein localises to the cell inner membrane. The catalysed reaction is Release of signal peptides from bacterial membrane prolipoproteins. Hydrolyzes -Xaa-Yaa-Zaa-|-(S,diacylglyceryl)Cys-, in which Xaa is hydrophobic (preferably Leu), and Yaa (Ala or Ser) and Zaa (Gly or Ala) have small, neutral side chains.. It participates in protein modification; lipoprotein biosynthesis (signal peptide cleavage). Its function is as follows. This protein specifically catalyzes the removal of signal peptides from prolipoproteins. The protein is Lipoprotein signal peptidase of Acinetobacter baylyi (strain ATCC 33305 / BD413 / ADP1).